Here is a 31-residue protein sequence, read N- to C-terminus: Photosystem II reaction center protein T (31 aa).

Residues 3 to 23 (ALVYTFLLIGTLGIIFFAIFF) form a helical membrane-spanning segment.

This sequence belongs to the PsbT family. As to quaternary structure, PSII is composed of 1 copy each of membrane proteins PsbA, PsbB, PsbC, PsbD, PsbE, PsbF, PsbH, PsbI, PsbJ, PsbK, PsbL, PsbM, PsbT, PsbY, PsbZ, Psb30/Ycf12, at least 3 peripheral proteins of the oxygen-evolving complex and a large number of cofactors. It forms dimeric complexes.

The protein resides in the plastid. It localises to the chloroplast thylakoid membrane. Found at the monomer-monomer interface of the photosystem II (PS II) dimer, plays a role in assembly and dimerization of PSII. PSII is a light-driven water plastoquinone oxidoreductase, using light energy to abstract electrons from H(2)O, generating a proton gradient subsequently used for ATP formation. The sequence is that of Photosystem II reaction center protein T from Stigeoclonium helveticum (Green alga).